The sequence spans 84 residues: MAPLFSSKKFFVDGLSSIVDAPLINFLLRSIIVAKSTLSTRTNPYSLNTLTISFFLIMYSVIGVDIVDGLYTTILSSAIFSTDI.

This is an uncharacterized protein from Vaccinia virus (strain Copenhagen) (VACV).